The sequence spans 155 residues: Ribosomal RNA large subunit methyltransferase H (155 aa).

An S-adenosyl-L-methionine-binding site is contributed by G103.

This sequence belongs to the RNA methyltransferase RlmH family. In terms of assembly, homodimer.

Its subcellular location is the cytoplasm. The catalysed reaction is pseudouridine(1915) in 23S rRNA + S-adenosyl-L-methionine = N(3)-methylpseudouridine(1915) in 23S rRNA + S-adenosyl-L-homocysteine + H(+). In terms of biological role, specifically methylates the pseudouridine at position 1915 (m3Psi1915) in 23S rRNA. The polypeptide is Ribosomal RNA large subunit methyltransferase H (Caulobacter vibrioides (strain ATCC 19089 / CIP 103742 / CB 15) (Caulobacter crescentus)).